Consider the following 354-residue polypeptide: Homer protein homolog 1 (354 aa).

Positions 1 to 110 (MGEQPIFSTR…EKFQEFKEAA (110 aa)) constitute a WH1 domain. An N-acetylglycine modification is found at G2. Residues 114 to 172 (KEKSQEKMELTSTPSQESAGGDLQSPLTPESINGTDDERTPDLTQNSEPRPEPTQNALP) form a disordered region. 2 stretches are compositionally biased toward polar residues: residues 138 to 147 (SPLTPESING) and 155 to 172 (DLTQ…NALP). Residues 181–352 (KHWEAELATL…LRDNLAKLLE (172 aa)) adopt a coiled-coil conformation. The tract at residues 290-354 (KLQEVEIRNK…DNLAKLLERS (65 aa)) is required for tetramerization. The residue at position 306 (S306) is a Phosphoserine.

Belongs to the Homer family. In terms of assembly, tetramer; this tetrameric structure is critical for forming the high-order complex with SHANK1, which in turn is necessary for the structural and functional integrity of dendritic spines. Interacts with GRM1, GRM5, ITPR1, DNM3, RYR1, RYR2 and SHANK3. Interacts with IFT57 and OPHN1. Encodes a coiled-coil structure that mediates homo- and heteromultimerization. Interacts with SHANK1; forms high-order polymerized complex with a mesh-like network structure, at least composed of SHANK1, HOMER1 and DLGAP1; the complex formation is SHANK1 multimerization dependent. Interacts with NFATC4. Interacts with DAGLA (via PPXXF motif); this interaction is required for the cell membrane localization of DAGLA. Interacts with SRGAP2.

The protein localises to the cytoplasm. The protein resides in the postsynaptic density. Its subcellular location is the synapse. It is found in the cell projection. It localises to the dendritic spine. Its function is as follows. Postsynaptic density scaffolding protein. Binds and cross-links cytoplasmic regions of GRM1, GRM5, ITPR1, DNM3, RYR1, RYR2, SHANK1 and SHANK3. By physically linking GRM1 and GRM5 with ER-associated ITPR1 receptors, it aids the coupling of surface receptors to intracellular calcium release. May also couple GRM1 to PI3 kinase through its interaction with AGAP2. Forms a high-order complex with SHANK1, which in turn is necessary for the structural and functional integrity of dendritic spines. Negatively regulates T cell activation by inhibiting the calcineurin-NFAT pathway. Acts by competing with calcineurin/PPP3CA for NFAT protein binding, hence preventing NFAT activation by PPP3CA. In Bos taurus (Bovine), this protein is Homer protein homolog 1.